A 412-amino-acid polypeptide reads, in one-letter code: Proteasome-activating nucleotidase (412 aa).

The stretch at 15–72 forms a coiled coil; it reads EDLYRYLLERVTNLEDRNTELREQLRQIEADKRYLETQKVRYEREVRKFKGEIEQMKS. Residues 197 to 202 and histidine 336 each bind ATP; that span reads GTGKTL. The segment at 410 to 412 is docks into pockets in the proteasome alpha-ring to cause gate opening; sequence MFA.

This sequence belongs to the AAA ATPase family. In terms of assembly, homohexamer. The hexameric complex has a two-ring architecture resembling a top hat that caps the 20S proteasome core at one or both ends. Upon ATP-binding, the C-terminus of PAN interacts with the alpha-rings of the proteasome core by binding to the intersubunit pockets.

Its subcellular location is the cytoplasm. Functionally, ATPase which is responsible for recognizing, binding, unfolding and translocation of substrate proteins into the archaeal 20S proteasome core particle. Is essential for opening the gate of the 20S proteasome via an interaction with its C-terminus, thereby allowing substrate entry and access to the site of proteolysis. Thus, the C-termini of the proteasomal ATPase function like a 'key in a lock' to induce gate opening and therefore regulate proteolysis. Unfolding activity requires energy from ATP hydrolysis, whereas ATP binding alone promotes ATPase-20S proteasome association which triggers gate opening, and supports translocation of unfolded substrates. This is Proteasome-activating nucleotidase from Methanosphaerula palustris (strain ATCC BAA-1556 / DSM 19958 / E1-9c).